The sequence spans 566 residues: Multidrug and toxin extrusion protein 1 (566 aa).

Methionine 1 bears the N-acetylmethionine mark. 13 helical membrane passes run 37-57, 72-92, 120-140, 152-172, 176-196, 216-236, 257-276, 295-315, 336-356, 370-390, 409-429, 437-457, and 543-563; these read LLVL…ISFI, AVTL…HGLS, LILL…EQIL, LTQT…LYTL, YLLN…ANLV, ALAN…YILW, SFLQ…WWAY, SITY…SVAA, AISL…LLGC, IVAL…FEAL, IVNA…LMFV, LWSG…VFIA, and GLLF…RVYI.

Belongs to the multi antimicrobial extrusion (MATE) (TC 2.A.66.1) family. In terms of tissue distribution, highly expressed in kidney and placenta, moderately in stomach, colon, lung, spleen, skeletal muscle and prostate, and slightly in spleen. In the kidney, found in medulla and cortex, especially in the proximal convoluted and straight tubules. No expression was observed in heart, brain, small intestine and liver. Expressed in Sertoli cells in testis.

The protein localises to the cell membrane. It localises to the apical cell membrane. It catalyses the reaction thiamine(out) + H(+)(in) = thiamine(in) + H(+)(out). The enzyme catalyses estrone 3-sulfate(in) + H(+)(out) = estrone 3-sulfate(out) + H(+)(in). It carries out the reaction creatinine(in) + H(+)(out) = creatinine(out) + H(+)(in). The catalysed reaction is agmatine(in) + H(+)(out) = agmatine(out) + H(+)(in). Functionally, multidrug efflux pump that functions as a H(+)/organic cation antiporter. Plays a physiological role in the excretion of cationic compounds including endogenous metabolites, drugs, toxins through the kidney and liver, into urine and bile respectively. Mediates the efflux of endogenous compounds such as creatinine, vitamin B1/thiamine, agmatine and estrone-3-sulfate. May also contribute to regulate the transport of cationic compounds in testis across the blood-testis-barrier. The polypeptide is Multidrug and toxin extrusion protein 1 (Slc47a1) (Rattus norvegicus (Rat)).